Here is a 218-residue protein sequence, read N- to C-terminus: Cytochrome b6 (218 aa).

A helical membrane pass occupies residues 35–55 (IFYCLGGITLVCFLIQFATGF). C38 contributes to the heme c binding site. Residues H89 and H103 each contribute to the heme b site. The next 3 helical transmembrane spans lie at 93–113 (ASMM…TGGF), 119–139 (LTWV…VTGY), and 189–209 (LHTF…FLMI). Residues H190 and H205 each contribute to the heme b site.

Belongs to the cytochrome b family. PetB subfamily. In terms of assembly, the 4 large subunits of the cytochrome b6-f complex are cytochrome b6, subunit IV (17 kDa polypeptide, PetD), cytochrome f and the Rieske protein, while the 4 small subunits are PetG, PetL, PetM and PetN. The complex functions as a dimer. It depends on heme b as a cofactor. Heme c serves as cofactor.

It localises to the cellular thylakoid membrane. Functionally, component of the cytochrome b6-f complex, which mediates electron transfer between photosystem II (PSII) and photosystem I (PSI), cyclic electron flow around PSI, and state transitions. The chain is Cytochrome b6 from Prochlorococcus marinus (strain MIT 9301).